We begin with the raw amino-acid sequence, 350 residues long: Protein-glutamate methylesterase/protein-glutamine glutaminase (350 aa).

In terms of domain architecture, Response regulatory spans 5–122 (KVLCVDDSAL…RDGLIEYSEV (118 aa)). At Asp-56 the chain carries 4-aspartylphosphate. The 195-residue stretch at 152–346 (PFASSEKLVI…ERILTRLGDR (195 aa)) folds into the CheB-type methylesterase domain. Catalysis depends on residues Ser-165, His-191, and Asp-288.

It belongs to the CheB family. Post-translationally, phosphorylated by CheA. Phosphorylation of the N-terminal regulatory domain activates the methylesterase activity.

It localises to the cytoplasm. It catalyses the reaction [protein]-L-glutamate 5-O-methyl ester + H2O = L-glutamyl-[protein] + methanol + H(+). The catalysed reaction is L-glutaminyl-[protein] + H2O = L-glutamyl-[protein] + NH4(+). In terms of biological role, involved in chemotaxis. Part of a chemotaxis signal transduction system that modulates chemotaxis in response to various stimuli. Catalyzes the demethylation of specific methylglutamate residues introduced into the chemoreceptors (methyl-accepting chemotaxis proteins or MCP) by CheR. Also mediates the irreversible deamidation of specific glutamine residues to glutamic acid. This is Protein-glutamate methylesterase/protein-glutamine glutaminase from Bordetella parapertussis (strain 12822 / ATCC BAA-587 / NCTC 13253).